Consider the following 140-residue polypeptide: Small ribosomal subunit protein uS12 (140 aa).

Proline 59 carries the post-translational modification Hydroxyproline.

It belongs to the universal ribosomal protein uS12 family.

This is Small ribosomal subunit protein uS12 (RPS23) from Encephalitozoon cuniculi (strain GB-M1) (Microsporidian parasite).